We begin with the raw amino-acid sequence, 346 residues long: Uroporphyrinogen decarboxylase (346 aa).

Substrate is bound by residues 21 to 25, aspartate 71, tyrosine 146, serine 201, and histidine 316; that span reads RQAGR.

The protein belongs to the uroporphyrinogen decarboxylase family. As to quaternary structure, homodimer.

Its subcellular location is the cytoplasm. It catalyses the reaction uroporphyrinogen III + 4 H(+) = coproporphyrinogen III + 4 CO2. It participates in porphyrin-containing compound metabolism; protoporphyrin-IX biosynthesis; coproporphyrinogen-III from 5-aminolevulinate: step 4/4. In terms of biological role, catalyzes the decarboxylation of four acetate groups of uroporphyrinogen-III to yield coproporphyrinogen-III. The sequence is that of Uroporphyrinogen decarboxylase from Rickettsia massiliae (strain Mtu5).